A 114-amino-acid polypeptide reads, in one-letter code: Prostate stem cell antigen (114 aa).

An N-terminal signal peptide occupies residues M1–A11. The UPAR/Ly6 domain occupies L12–S86. Cystine bridges form between C14-C39, C17-C26, C32-C57, C61-C77, and C78-C83. N31 is a glycosylation site (N-linked (GlcNAc...) asparagine). The GPI-anchor amidated serine moiety is linked to residue S86. Residues S86–L114 constitute a propeptide, removed in mature form.

As to quaternary structure, interacts with CHRNA4. Post-translationally, N-glycosylated. In terms of tissue distribution, highly expressed in prostate (basal, secretory and neuroendocrine epithelium cells). Also found in bladder (transitional epithelium), placenta (trophoblasts), stomach (neuroendocrine cells), colon (neuroendocrine cells) and kidney (collecting ducts). Overexpressed in prostate cancers and expression is correlated with tumor stage, grade and androgen-independence. Highly expressed in prostate cancer bone metastases. Expressed in gastric epithelial cells, mainly in the isthmus (at protein level). Not detected in normal intestinal epithelium (at protein level). Expressed in brain cortex; expression is significantly increased in the front cortex of Alzheimer disease patients.

It localises to the cell membrane. May be involved in the regulation of cell proliferation. Has a cell-proliferation inhibition activity in vitro. Its function is as follows. May act as a modulator of nicotinic acetylcholine receptors (nAChRs) activity. In vitro inhibits nicotine-induced signaling probably implicating alpha-3:beta-2- or alpha-7-containing nAChRs. This is Prostate stem cell antigen (PSCA) from Homo sapiens (Human).